The sequence spans 99 residues: Keratinocyte differentiation-associated protein (99 aa).

The first 22 residues, 1–22 (MKIPVLPAVVLLSLLVLHSAQG), serve as a signal peptide directing secretion.

Highly expressed in skin and detected at lower levels in thymus. In skin, found exclusively in lamellar granules of granular keratinocytes and in the intracellular space of the stratum corneum. Also highly expressed in oral mucosa, tongue, esophagus, and stomach, and at much lower levels in bladder and uterus. Not detected in gastrointestinal mucosa.

The protein localises to the secreted. Its function is as follows. May act as a soluble regulator of keratinocyte differentiation. May play an important role in embryonic skin morphogenesis. In Homo sapiens (Human), this protein is Keratinocyte differentiation-associated protein (KRTDAP).